A 279-amino-acid polypeptide reads, in one-letter code: Bifunctional protein FolD (279 aa).

NADP(+) is bound by residues 165–167 (GRS), S190, and I231.

The protein belongs to the tetrahydrofolate dehydrogenase/cyclohydrolase family. In terms of assembly, homodimer.

The catalysed reaction is (6R)-5,10-methylene-5,6,7,8-tetrahydrofolate + NADP(+) = (6R)-5,10-methenyltetrahydrofolate + NADPH. It catalyses the reaction (6R)-5,10-methenyltetrahydrofolate + H2O = (6R)-10-formyltetrahydrofolate + H(+). It participates in one-carbon metabolism; tetrahydrofolate interconversion. Catalyzes the oxidation of 5,10-methylenetetrahydrofolate to 5,10-methenyltetrahydrofolate and then the hydrolysis of 5,10-methenyltetrahydrofolate to 10-formyltetrahydrofolate. The protein is Bifunctional protein FolD of Halalkalibacterium halodurans (strain ATCC BAA-125 / DSM 18197 / FERM 7344 / JCM 9153 / C-125) (Bacillus halodurans).